Consider the following 406-residue polypeptide: [Pyruvate dehydrogenase (acetyl-transferring)] kinase isozyme 3, mitochondrial (406 aa).

One can recognise a Histidine kinase domain in the interval 131 to 362; sequence IEYKEKFGFD…DAVIYLKALS (232 aa). 247-254 lines the ATP pocket; the sequence is ELFKNSMR. Position 278 is an N6-succinyllysine (Lys-278). ATP is bound by residues Asp-287, 306-307, and 323-328; these read ST and GFGYGL. A disordered region spans residues 383–406; it reads TPEADDWSNPSSEPRDASKYKAKQ. Residues 395 to 406 show a composition bias toward basic and acidic residues; the sequence is EPRDASKYKAKQ.

This sequence belongs to the PDK/BCKDK protein kinase family. Homodimer. Interacts with the pyruvate dehydrogenase complex subunit DLAT, and is part of the multimeric pyruvate dehydrogenase complex that contains multiple copies of pyruvate dehydrogenase (E1), dihydrolipoamide acetyltransferase (DLAT, E2) and lipoamide dehydrogenase (DLD, E3). In terms of tissue distribution, expressed in heart, skeletal muscle, spinal cord, as well as fetal and adult brain.

It is found in the mitochondrion matrix. It catalyses the reaction L-seryl-[pyruvate dehydrogenase E1 alpha subunit] + ATP = O-phospho-L-seryl-[pyruvate dehydrogenase E1 alpha subunit] + ADP + H(+). Activated by interaction with DLAT. Inhibited by AZD7545, dichloroacetate and radicicol. Its function is as follows. Inhibits pyruvate dehydrogenase activity by phosphorylation of the E1 subunit PDHA1, and thereby regulates glucose metabolism and aerobic respiration. Can also phosphorylate PDHA2. Decreases glucose utilization and increases fat metabolism in response to prolonged fasting, and as adaptation to a high-fat diet. Plays a role in glucose homeostasis and in maintaining normal blood glucose levels in function of nutrient levels and under starvation. Plays a role in the generation of reactive oxygen species. The protein is [Pyruvate dehydrogenase (acetyl-transferring)] kinase isozyme 3, mitochondrial (PDK3) of Homo sapiens (Human).